The primary structure comprises 636 residues: Methyl-CpG-binding domain protein 1 (636 aa).

Residues 1–69 (MAESWQDCPA…TLFDFRQGTL (69 aa)) form the MBD domain. The tract at residues 75–113 (KTHPLAVPSKKKKKPSKPAKTKKQQVGLQRSEVRIETPQ) is disordered. The segment covering 83-97 (SKKKKKPSKPAKTKK) has biased composition (basic residues). The short motif at 84-88 (KKKKK) is the Nuclear localization signal element. A Glycyl lysine isopeptide (Lys-Gly) (interchain with G-Cter in SUMO2) cross-link involves residue Lys117. CXXC-type zinc fingers lie at residues 187 to 234 (RMFK…RRCL) and 235 to 281 (RIME…RRCF). Positions 194, 197, 200, 206, 209, 212, 228, 233, 243, 246, 249, 255, 258, 261, 275, and 280 each coordinate Zn(2+). Residues 291-314 (GSKVASQRHSQAPPLPPHPASQYT) are disordered. Lys293 is covalently cross-linked (Glycyl lysine isopeptide (Lys-Gly) (interchain with G-Cter in SUMO2)). The CXXC-type 3 zinc-finger motif lies at 348–396 (TNQRQNRKCGACAACLRRMDCGRCDFCCDKPKFGGGNQKRQKCRWRQCL). Zn(2+)-binding residues include Cys356, Cys359, Cys362, Cys368, Cys371, Cys374, Cys390, and Cys395. The tract at residues 407-474 (AGSGSGEGAG…GRGSVLPQPD (68 aa)) is disordered. Ser409 carries the phosphoserine modification. Residues Lys443 and Lys461 each participate in a glycyl lysine isopeptide (Lys-Gly) (interchain with G-Cter in SUMO2) cross-link. Residues Lys520 and Lys559 each participate in a glycyl lysine isopeptide (Lys-Gly) (interchain with G-Cter in SUMO2); alternate cross-link. The interval 543-589 (QSGFPSKAADPDLSPVKQEPPGPEEDGEEKKDDVSETTPAEEIGGVG) is disordered. The interval 550 to 612 (AADPDLSPVK…RLRDAEAWLP (63 aa)) is transcriptional repression domain (TRD).

Interacts with OASL, ATF7IP, ATF7IP2 and BAHD1. Binds CHAF1A and the SUV39H1-CBX5 complex via the MBD domain. Binds MGP via the TRD domain. May be part of the MeCP1 complex. During DNA replication, it recruits SETDB1 to form a S phase-specific complex that facilitates methylation of H3 'Lys-9' during replication-coupled chromatin assembly and is at least composed of the CAF-1 subunit CHAF1A, MBD1 and SETDB1. In terms of assembly, interacts with the Ten-1 ICD form of TENM1. In terms of processing, sumoylated, sumoylation may increase interaction with ATF7IP. As to expression, highly expressed in kidney, liver and brain. Detected at lower levels in heart, lung, skeletal muscle, spleen and testis.

It is found in the nucleus. It localises to the nucleus matrix. The protein localises to the nucleus speckle. The protein resides in the chromosome. In terms of biological role, transcriptional repressor that binds CpG islands in promoters where the DNA is methylated at position 5 of cytosine within CpG dinucleotides. Binding is abolished by the presence of 7-mG that is produced by DNA damage by methylmethanesulfonate (MMS). Acts as transcriptional repressor and plays a role in gene silencing by recruiting ATF7IP, which in turn recruits factors such as the histone methyltransferase SETDB1. Probably forms a complex with SETDB1 and ATF7IP that represses transcription and couples DNA methylation and histone 'Lys-9' trimethylation. Isoform 1 can also repress transcription from unmethylated promoters. This Mus musculus (Mouse) protein is Methyl-CpG-binding domain protein 1.